We begin with the raw amino-acid sequence, 568 residues long: DNA ligase 2 (568 aa).

Residue E254 participates in ATP binding. K256 serves as the catalytic N6-AMP-lysine intermediate. R261, R276, E306, F346, R425, and K431 together coordinate ATP.

Belongs to the ATP-dependent DNA ligase family. Requires Mg(2+) as cofactor.

It carries out the reaction ATP + (deoxyribonucleotide)n-3'-hydroxyl + 5'-phospho-(deoxyribonucleotide)m = (deoxyribonucleotide)n+m + AMP + diphosphate.. Its function is as follows. DNA ligase that seals nicks in double-stranded DNA during DNA replication, DNA recombination and DNA repair. The chain is DNA ligase 2 from Methanosarcina mazei (strain ATCC BAA-159 / DSM 3647 / Goe1 / Go1 / JCM 11833 / OCM 88) (Methanosarcina frisia).